Reading from the N-terminus, the 374-residue chain is Homoserine O-acetyltransferase (374 aa).

The 309-residue stretch at 45–353 folds into the AB hydrolase-1 domain; that stretch reads NAILVLHALT…PYGHDAFLIE (309 aa). Catalysis depends on serine 151, which acts as the Nucleophile. Arginine 220 contributes to the substrate binding site. Active-site residues include aspartate 314 and histidine 347. A substrate-binding site is contributed by aspartate 348.

It belongs to the AB hydrolase superfamily. MetX family. Homodimer.

It is found in the cytoplasm. The enzyme catalyses L-homoserine + acetyl-CoA = O-acetyl-L-homoserine + CoA. It functions in the pathway amino-acid biosynthesis; L-methionine biosynthesis via de novo pathway; O-acetyl-L-homoserine from L-homoserine: step 1/1. In terms of biological role, transfers an acetyl group from acetyl-CoA to L-homoserine, forming acetyl-L-homoserine. The chain is Homoserine O-acetyltransferase from Moorella thermoacetica (strain ATCC 39073 / JCM 9320).